A 281-amino-acid chain; its full sequence is MSEQTGLALPQTMDRSCWVCFATDEDDRTAEWVRPCRCRGSTKWVHQTCLQRWVDEKQRGNSTARVACPQCNAEYLIVFPKLGPVVYVLDLADRLISKACPFAAAGIMVGSIYWTAVTYGAVTVMQVVGHKEGLDVMERADPLFLLIGLPTIPVMLILGKMIRWEDYVLRLWRKYSNKLQILNSIFPGIGCPVPRIPAEANPLADHVSATRILCGALVFPTIATIVGKLMFSSVNSNLQRTILGGIAFVAIKGAFKVYFKQQQYLRQAHRKILNYPEQEGA.

The RING-CH-type zinc finger occupies 9-78 (LPQTMDRSCW…PQCNAEYLIV (70 aa)). Positions 17, 20, 36, 38, 46, 49, 68, and 71 each coordinate Zn(2+). A run of 4 helical transmembrane segments spans residues 102-122 (FAAAGIMVGSIYWTAVTYGAV), 142-162 (PLFLLIGLPTIPVMLILGKMI), 212-232 (ILCGALVFPTIATIVGKLMFS), and 241-261 (TILGGIAFVAIKGAFKVYFKQ).

The protein resides in the mitochondrion outer membrane. It localises to the endoplasmic reticulum membrane. It carries out the reaction S-ubiquitinyl-[E2 ubiquitin-conjugating enzyme]-L-cysteine + [acceptor protein]-L-lysine = [E2 ubiquitin-conjugating enzyme]-L-cysteine + N(6)-ubiquitinyl-[acceptor protein]-L-lysine.. It functions in the pathway protein modification; protein ubiquitination. Functionally, mitochondrial E3 ubiquitin-protein ligase that plays a crucial role in the control of mitochondrial morphology by acting as a positive regulator of mitochondrial fission. May play a role in the prevention of cell senescence acting as a regulator of mitochondrial quality control. The sequence is that of E3 ubiquitin-protein ligase MARCHF5 (MARCHF5) from Gallus gallus (Chicken).